The primary structure comprises 362 residues: Methylthioribose-1-phosphate isomerase (362 aa).

Residues 53-55 (RGA), Arg90, and Gln201 each bind substrate. The active-site Proton donor is the Asp242. 252 to 253 (NK) lines the substrate pocket.

It belongs to the eIF-2B alpha/beta/delta subunits family. MtnA subfamily.

The catalysed reaction is 5-(methylsulfanyl)-alpha-D-ribose 1-phosphate = 5-(methylsulfanyl)-D-ribulose 1-phosphate. It functions in the pathway amino-acid biosynthesis; L-methionine biosynthesis via salvage pathway; L-methionine from S-methyl-5-thio-alpha-D-ribose 1-phosphate: step 1/6. In terms of biological role, catalyzes the interconversion of methylthioribose-1-phosphate (MTR-1-P) into methylthioribulose-1-phosphate (MTRu-1-P). This chain is Methylthioribose-1-phosphate isomerase, found in Paramagnetospirillum magneticum (strain ATCC 700264 / AMB-1) (Magnetospirillum magneticum).